Here is a 145-residue protein sequence, read N- to C-terminus: Deoxyuridine 5'-triphosphate nucleotidohydrolase (145 aa).

Substrate is bound by residues 63 to 65, Asn76, and 80 to 82; these read RSG and TID.

It belongs to the dUTPase family. Mg(2+) is required as a cofactor.

It carries out the reaction dUTP + H2O = dUMP + diphosphate + H(+). Its pathway is pyrimidine metabolism; dUMP biosynthesis; dUMP from dCTP (dUTP route): step 2/2. In terms of biological role, this enzyme is involved in nucleotide metabolism: it produces dUMP, the immediate precursor of thymidine nucleotides and it decreases the intracellular concentration of dUTP so that uracil cannot be incorporated into DNA. The sequence is that of Deoxyuridine 5'-triphosphate nucleotidohydrolase from Chlamydia pneumoniae (Chlamydophila pneumoniae).